A 370-amino-acid chain; its full sequence is MNTFSLQTRLYSGQGSLAVLKRFTNKHIWIICDGFLAHSPLLDTLRNALPADNRISVFSEITPDPTIHTVVQGIAQMQALQPQVVIGFGGGSAMDAAKAIVWFSQQSGINIETCVAIPTTSGTGSEVTSACVISDPDKGIKYPLFNNALYPDMAILDPELVVSVPPQITANTGMDVLTHALEAWVSPRASDFTDALAEKAAKLVFQYLPTAVEKGDCVATRGKMHNASTLAGMAFSQAGLGLNHAIAHQLGGQFHLPHGLANALLLTTVIRFNAGVPRAAKRYARLAKACGFCPAEANDIAAINALIQQIELLKQRCVLPSLAVALKEGRSDFSARIPAMVQAALADVTLRTNPRPANAEAIRELLEELL.

Belongs to the iron-containing alcohol dehydrogenase family. As to quaternary structure, interacts with PduP, probably via the N-terminus of PduQ. It depends on Fe cation as a cofactor.

The protein localises to the bacterial microcompartment. The catalysed reaction is 1-propanol + NAD(+) = propanal + NADH + H(+). Its pathway is polyol metabolism; 1,2-propanediol degradation. With respect to regulation, enzyme is oxygen sensitive. In terms of biological role, an iron-dependent alcohol dehydrogenase required for optimal 1,2-propanediol (1,2-PD) degradation. NAD(+) and NADH are regenerated internally within the bacterial microcompartment (BMC) dedicated to 1,2-PD degradation by the PduP and PduQ enzymes, which reduce NAD(+) and oxidize NADH respectively, although there must also be cofactor transport across the BMC. Functionally, the 1,2-PD-specific bacterial microcompartment (BMC) concentrates low levels of 1,2-PD catabolic enzymes, concentrates volatile reaction intermediates thus enhancing pathway flux and keeps the level of toxic, mutagenic propionaldehyde low. The sequence is that of 1-propanol dehydrogenase PduQ from Salmonella typhimurium (strain LT2 / SGSC1412 / ATCC 700720).